A 219-amino-acid polypeptide reads, in one-letter code: Pollen-specific protein SF3 (219 aa).

LIM zinc-binding domains follow at residues 9–109 (QKCT…TRDK) and 110–167 (CNAC…QLFK). The interval 181–219 (VAAPAESETQNTETQNAETQNADTQNADTQNTETQNGSV) is disordered. Over residues 185–202 (AESETQNTETQNAETQNA) the composition is skewed to low complexity. Positions 203–219 (DTQNADTQNTETQNGSV) are enriched in polar residues.

In terms of tissue distribution, pollen.

Could possibly involved in controlling pollen-specific processes such as male gamete maturation, pollen tube formation, or even fertilization. This is Pollen-specific protein SF3 (SF3) from Helianthus annuus (Common sunflower).